The primary structure comprises 139 residues: D-ribose pyranase (139 aa).

H20 functions as the Proton donor in the catalytic mechanism. Substrate-binding positions include D28, H106, and 128-130 (YAN).

This sequence belongs to the RbsD / FucU family. RbsD subfamily. As to quaternary structure, homodecamer.

The protein localises to the cytoplasm. The enzyme catalyses beta-D-ribopyranose = beta-D-ribofuranose. Its pathway is carbohydrate metabolism; D-ribose degradation; D-ribose 5-phosphate from beta-D-ribopyranose: step 1/2. Its function is as follows. Catalyzes the interconversion of beta-pyran and beta-furan forms of D-ribose. This chain is D-ribose pyranase, found in Vibrio campbellii (strain ATCC BAA-1116).